Here is a 186-residue protein sequence, read N- to C-terminus: Large ribosomal subunit protein uL22 (186 aa).

The disordered stretch occupies residues 159 to 186 (KAAENEPAKKKLSKKKLQRQKEKMMRNE). A compositionally biased stretch (basic and acidic residues) spans 177-186 (RQKEKMMRNE).

Belongs to the universal ribosomal protein uL22 family.

The chain is Large ribosomal subunit protein uL22 (RpL17) from Aedes albopictus (Asian tiger mosquito).